The sequence spans 414 residues: Serine hydroxymethyltransferase (414 aa).

(6S)-5,6,7,8-tetrahydrofolate-binding positions include Leu-116 and Gly-120–Leu-122. The residue at position 224 (Lys-224) is an N6-(pyridoxal phosphate)lysine. (6S)-5,6,7,8-tetrahydrofolate is bound by residues Glu-240 and Ser-348–Phe-350.

This sequence belongs to the SHMT family. As to quaternary structure, homodimer. It depends on pyridoxal 5'-phosphate as a cofactor.

The protein resides in the cytoplasm. It catalyses the reaction (6R)-5,10-methylene-5,6,7,8-tetrahydrofolate + glycine + H2O = (6S)-5,6,7,8-tetrahydrofolate + L-serine. It functions in the pathway one-carbon metabolism; tetrahydrofolate interconversion. It participates in amino-acid biosynthesis; glycine biosynthesis; glycine from L-serine: step 1/1. Its function is as follows. Catalyzes the reversible interconversion of serine and glycine with tetrahydrofolate (THF) serving as the one-carbon carrier. This reaction serves as the major source of one-carbon groups required for the biosynthesis of purines, thymidylate, methionine, and other important biomolecules. Also exhibits THF-independent aldolase activity toward beta-hydroxyamino acids, producing glycine and aldehydes, via a retro-aldol mechanism. This Campylobacter jejuni subsp. jejuni serotype O:2 (strain ATCC 700819 / NCTC 11168) protein is Serine hydroxymethyltransferase.